Reading from the N-terminus, the 358-residue chain is Protein ttm-2 (358 aa).

It belongs to the arrestin family.

Involved in resistance to B.thuringiensis pore-forming toxin Cry5B downstream of the sek-1 and pmk-1 MAPK kinase pathway. The polypeptide is Protein ttm-2 (Caenorhabditis elegans).